The primary structure comprises 460 residues: Tol-Pal system protein TolB (460 aa).

Positions 1-22 (MTIFQKSFILLIIWNFSLFAFS) are cleaved as a signal peptide.

The protein belongs to the TolB family. The Tol-Pal system is composed of five core proteins: the inner membrane proteins TolA, TolQ and TolR, the periplasmic protein TolB and the outer membrane protein Pal. They form a network linking the inner and outer membranes and the peptidoglycan layer.

It localises to the periplasm. Functionally, part of the Tol-Pal system, which plays a role in outer membrane invagination during cell division and is important for maintaining outer membrane integrity. TolB occupies a key intermediary position in the Tol-Pal system because it communicates directly with both membrane-embedded components, Pal in the outer membrane and TolA in the inner membrane. This Blochmanniella floridana protein is Tol-Pal system protein TolB.